The following is a 139-amino-acid chain: Transcription antitermination protein NusB (139 aa).

The protein belongs to the NusB family.

Functionally, involved in transcription antitermination. Required for transcription of ribosomal RNA (rRNA) genes. Binds specifically to the boxA antiterminator sequence of the ribosomal RNA (rrn) operons. This Sodalis glossinidius (strain morsitans) protein is Transcription antitermination protein NusB.